A 196-amino-acid polypeptide reads, in one-letter code: Holliday junction branch migration complex subunit RuvA (196 aa).

Residues 1 to 62 are domain I; sequence MYEYINGLIT…ENDISLYGFI (62 aa). A domain II region spans residues 63 to 141; the sequence is DADEKALFNK…ELASKTGMVD (79 aa). The flexible linker stretch occupies residues 142–148; the sequence is SSSNPEQ. A domain III region spans residues 148–196; sequence QSQALDDALEALLALGYTAKDVKAVAQIIGRNSDTTDGYIRSALKLLVK.

The protein belongs to the RuvA family. Homotetramer. Forms an RuvA(8)-RuvB(12)-Holliday junction (HJ) complex. HJ DNA is sandwiched between 2 RuvA tetramers; dsDNA enters through RuvA and exits via RuvB. An RuvB hexamer assembles on each DNA strand where it exits the tetramer. Each RuvB hexamer is contacted by two RuvA subunits (via domain III) on 2 adjacent RuvB subunits; this complex drives branch migration. In the full resolvosome a probable DNA-RuvA(4)-RuvB(12)-RuvC(2) complex forms which resolves the HJ.

The protein localises to the cytoplasm. Functionally, the RuvA-RuvB-RuvC complex processes Holliday junction (HJ) DNA during genetic recombination and DNA repair, while the RuvA-RuvB complex plays an important role in the rescue of blocked DNA replication forks via replication fork reversal (RFR). RuvA specifically binds to HJ cruciform DNA, conferring on it an open structure. The RuvB hexamer acts as an ATP-dependent pump, pulling dsDNA into and through the RuvAB complex. HJ branch migration allows RuvC to scan DNA until it finds its consensus sequence, where it cleaves and resolves the cruciform DNA. This chain is Holliday junction branch migration complex subunit RuvA, found in Leuconostoc mesenteroides subsp. mesenteroides (strain ATCC 8293 / DSM 20343 / BCRC 11652 / CCM 1803 / JCM 6124 / NCDO 523 / NBRC 100496 / NCIMB 8023 / NCTC 12954 / NRRL B-1118 / 37Y).